Here is a 130-residue protein sequence, read N- to C-terminus: Biotin carboxyl carrier protein (130 aa).

The interval 20–64 (EISESSVPAATPITPTTENTRAASDQKQQSQTPSPAATASAANTM) is disordered. Over residues 23 to 46 (ESSVPAATPITPTTENTRAASDQK) the composition is skewed to polar residues. Over residues 47-64 (QQSQTPSPAATASAANTM) the composition is skewed to low complexity. Residues 55–130 (AATASAANTM…NAGDNLITIA (76 aa)) form the Biotinyl-binding domain. An N6-biotinyllysine modification is found at Lys-96.

In Streptococcus mutans serotype c (strain ATCC 700610 / UA159), this protein is Biotin carboxyl carrier protein (bcc).